Consider the following 473-residue polypeptide: Bifunctional protein HldE (473 aa).

The interval 1–318 (MKLTLPRYDQ…RAVQREEGSE (318 aa)) is ribokinase. 194 to 197 (NLHE) lines the ATP pocket. Aspartate 263 is a catalytic residue. A cytidylyltransferase region spans residues 343–473 (FTNGCFDILH…TAIVEKIRNK (131 aa)).

This sequence in the N-terminal section; belongs to the carbohydrate kinase PfkB family. It in the C-terminal section; belongs to the cytidylyltransferase family. In terms of assembly, homodimer.

The catalysed reaction is D-glycero-beta-D-manno-heptose 7-phosphate + ATP = D-glycero-beta-D-manno-heptose 1,7-bisphosphate + ADP + H(+). It catalyses the reaction D-glycero-beta-D-manno-heptose 1-phosphate + ATP + H(+) = ADP-D-glycero-beta-D-manno-heptose + diphosphate. It participates in nucleotide-sugar biosynthesis; ADP-L-glycero-beta-D-manno-heptose biosynthesis; ADP-L-glycero-beta-D-manno-heptose from D-glycero-beta-D-manno-heptose 7-phosphate: step 1/4. The protein operates within nucleotide-sugar biosynthesis; ADP-L-glycero-beta-D-manno-heptose biosynthesis; ADP-L-glycero-beta-D-manno-heptose from D-glycero-beta-D-manno-heptose 7-phosphate: step 3/4. Catalyzes the phosphorylation of D-glycero-D-manno-heptose 7-phosphate at the C-1 position to selectively form D-glycero-beta-D-manno-heptose-1,7-bisphosphate. Functionally, catalyzes the ADP transfer from ATP to D-glycero-beta-D-manno-heptose 1-phosphate, yielding ADP-D-glycero-beta-D-manno-heptose. This chain is Bifunctional protein HldE, found in Ectopseudomonas mendocina (strain ymp) (Pseudomonas mendocina).